Here is a 317-residue protein sequence, read N- to C-terminus: Probable RuBisCO transcriptional regulator (317 aa).

Positions F6–T63 constitute an HTH lysR-type domain. Residues F23–Q42 constitute a DNA-binding region (H-T-H motif).

Belongs to the LysR transcriptional regulatory family.

The protein localises to the plastid. It localises to the chloroplast. Trans-acting transcriptional regulator of RuBisCO genes (rbcL and rbcS) expression. The chain is Probable RuBisCO transcriptional regulator (rbcR) from Porphyra purpurea (Red seaweed).